A 262-amino-acid polypeptide reads, in one-letter code: Lens fiber major intrinsic protein (262 aa).

Over 1-9 (MRELRSSSF) the chain is Cytoplasmic. A helical transmembrane segment spans residues 10-29 (WRAILAEFLGSLLYTLLGLG). Residues 30-41 (ASLRWAPGPHGV) lie on the Extracellular side of the membrane. Residues 42–59 (LGSALAFGLAQATLVQAL) form a helical membrane-spanning segment. The Cytoplasmic segment spans residues 60–61 (GH). Positions 62 to 77 (VSGGHINPAITLAFLL) form an intramembrane region, discontinuously helical. An NPA 1 motif is present at residues 68-70 (NPA). Over 78–82 (ASQLS) the chain is Cytoplasmic. A helical transmembrane segment spans residues 83-106 (LPRALGYLLAQLLGALAGAGVLYG). At 107 to 127 (VTPAAVRGTLGLSALHPSVGP) the chain is on the extracellular side. A helical membrane pass occupies residues 128-148 (GQGTVVELLLTAQFILCVFAS). Residues 149–156 (FDDRHDGR) lie on the Cytoplasmic side of the membrane. The helical transmembrane segment at 157–175 (PGSAALPVGFSLALGHLFG) threads the bilayer. Over 176-178 (IPF) the chain is Extracellular. Positions 179 to 193 (TGAGMNPARSFAPAV) form an intramembrane region, discontinuously helical. Positions 184 to 186 (NPA) match the NPA 2 motif. At 194 to 200 (ITRNFTN) the chain is on the extracellular side. Residues 201–222 (HWVFWAGPLLGAALAALLYELA) traverse the membrane as a helical segment. The Cytoplasmic portion of the chain corresponds to 223–262 (LCPRARSMAERLAVLRGEPPAAAPPPEPPAEPLELKTQGL). Residues 227 to 237 (ARSMAERLAVL) are interaction with CALM. Residues 240–262 (EPPAAAPPPEPPAEPLELKTQGL) form a disordered region. Pro residues predominate over residues 243–253 (AAAPPPEPPAE).

Belongs to the MIP/aquaporin (TC 1.A.8) family. Homotetramer; each monomer provides an independent water pore. Two homotetramers on opposing membranes can dimerize, forming a cell-cell junction. Interacts with CALM; the calcium-calmodulin/CALM complex interacts with the cytoplasmic domains of two aquaporins, leading to channel closure. During early stages of lens development, interacts through its C-terminal region with Cx56 and GJA8/Cx45.6. Major component of lens fiber gap junctions.

The protein resides in the cell membrane. It is found in the cell junction. It catalyses the reaction H2O(in) = H2O(out). With respect to regulation, the water channel activity is inhibited by calcium through calmodulin/CALM. Functionally, aquaporins form homotetrameric transmembrane channels, with each monomer independently mediating water transport across the plasma membrane along its osmotic gradient. Specifically expressed in lens fiber cells, this aquaporin is crucial for maintaining lens water homeostasis and transparency. Beyond water permeability, it also acts as a cell-to-cell adhesion molecule, forming thin junctions between lens fiber cells that are essential for maintaining the ordered structure and transparency of the lens. This chain is Lens fiber major intrinsic protein, found in Gallus gallus (Chicken).